Consider the following 238-residue polypeptide: tRNA (guanine-N(7)-)-methyltransferase (238 aa).

Residues E68, E93, D120, and D143 each coordinate S-adenosyl-L-methionine. The active site involves D143. Substrate-binding positions include K147, D179, and 216–219 (TKFE).

It belongs to the class I-like SAM-binding methyltransferase superfamily. TrmB family. In terms of assembly, monomer.

The enzyme catalyses guanosine(46) in tRNA + S-adenosyl-L-methionine = N(7)-methylguanosine(46) in tRNA + S-adenosyl-L-homocysteine. It functions in the pathway tRNA modification; N(7)-methylguanine-tRNA biosynthesis. Catalyzes the formation of N(7)-methylguanine at position 46 (m7G46) in tRNA. The polypeptide is tRNA (guanine-N(7)-)-methyltransferase (Edwardsiella ictaluri (strain 93-146)).